The sequence spans 306 residues: MLIRHAPDLTDNDVTGHGLYLRRRDFIGGAAGLGLMAAAGSASARGLTYGPGFSTTEAPTPKKDITSYNNFYEFGVNKEDPSENAGSLKTRPWTVRVDGECEKPATFAIDDLIKGNKLEERIYRMRCVEGWSMVIPWVGFPLKDLIAQVKPTSKAKFVAFETLMRPSEMPGQRWDTLQWPYREGLRIDEAVHPLAILAVGLYGDVLPNQNGAPLRLVVPWKYGFKGIKSIVRISLVETMPATAWNVLAPREYGFYSNVNPAVDHPRWSQATERRIGEFRRRETLPFNGYGQYVADLYRGMDLKRNF.

Positions 1-44 (MLIRHAPDLTDNDVTGHGLYLRRRDFIGGAAGLGLMAAAGSASA) form a signal peptide, tat-type signal. Mo-molybdopterin is bound by residues Asn-69, 72 to 73 (YE), Cys-127, Thr-162, Asn-210, Arg-215, and 226 to 228 (GIK).

This sequence belongs to the MsrP family. Heterodimer of a catalytic subunit (MsrP) and a heme-binding subunit (MsrQ). Requires Mo-molybdopterin as cofactor. Post-translationally, predicted to be exported by the Tat system. The position of the signal peptide cleavage has not been experimentally proven.

It localises to the periplasm. The enzyme catalyses L-methionyl-[protein] + a quinone + H2O = L-methionyl-(S)-S-oxide-[protein] + a quinol. It carries out the reaction L-methionyl-[protein] + a quinone + H2O = L-methionyl-(R)-S-oxide-[protein] + a quinol. Functionally, part of the MsrPQ system that repairs oxidized periplasmic proteins containing methionine sulfoxide residues (Met-O), using respiratory chain electrons. Thus protects these proteins from oxidative-stress damage caused by reactive species of oxygen and chlorine generated by the host defense mechanisms. MsrPQ is essential for the maintenance of envelope integrity under bleach stress, rescuing a wide series of structurally unrelated periplasmic proteins from methionine oxidation. The catalytic subunit MsrP is non-stereospecific, being able to reduce both (R-) and (S-) diastereoisomers of methionine sulfoxide. The sequence is that of Protein-methionine-sulfoxide reductase catalytic subunit MsrP from Caulobacter sp. (strain K31).